We begin with the raw amino-acid sequence, 290 residues long: Acetyl-coenzyme A carboxylase carboxyl transferase subunit beta (290 aa).

The CoA carboxyltransferase N-terminal domain maps to leucine 27–alanine 290. Residues cysteine 31, cysteine 34, cysteine 50, and cysteine 53 each contribute to the Zn(2+) site. A C4-type zinc finger spans residues cysteine 31 to cysteine 53.

It belongs to the AccD/PCCB family. In terms of assembly, acetyl-CoA carboxylase is a heterohexamer composed of biotin carboxyl carrier protein (AccB), biotin carboxylase (AccC) and two subunits each of ACCase subunit alpha (AccA) and ACCase subunit beta (AccD). It depends on Zn(2+) as a cofactor.

The protein resides in the cytoplasm. It carries out the reaction N(6)-carboxybiotinyl-L-lysyl-[protein] + acetyl-CoA = N(6)-biotinyl-L-lysyl-[protein] + malonyl-CoA. Its pathway is lipid metabolism; malonyl-CoA biosynthesis; malonyl-CoA from acetyl-CoA: step 1/1. Component of the acetyl coenzyme A carboxylase (ACC) complex. Biotin carboxylase (BC) catalyzes the carboxylation of biotin on its carrier protein (BCCP) and then the CO(2) group is transferred by the transcarboxylase to acetyl-CoA to form malonyl-CoA. The polypeptide is Acetyl-coenzyme A carboxylase carboxyl transferase subunit beta (Burkholderia multivorans (strain ATCC 17616 / 249)).